Consider the following 200-residue polypeptide: MTEVALIDAGGANLGSVRYALQRLGVEPRLVCDARGLEGAARVILPGVGSAPEAMARLNNQGLIEPLLRLQVPLIGICLGMQLLFEHSEEGDVPCLGLLPGRVRRLTPAPSIRVPHMGWNRLLPLRASPLLAEVPEGANAYFVHSYAVPLTTAAVAACDHGGMFTAIVQQGVRCGAQFHPERSAETGARILRNFLEMDAA.

Residues 3–200 enclose the Glutamine amidotransferase type-1 domain; that stretch reads EVALIDAGGA…LRNFLEMDAA (198 aa). Catalysis depends on C78, which acts as the Nucleophile. Catalysis depends on residues H179 and E181.

As to quaternary structure, heterodimer of HisH and HisF.

The protein localises to the cytoplasm. It catalyses the reaction 5-[(5-phospho-1-deoxy-D-ribulos-1-ylimino)methylamino]-1-(5-phospho-beta-D-ribosyl)imidazole-4-carboxamide + L-glutamine = D-erythro-1-(imidazol-4-yl)glycerol 3-phosphate + 5-amino-1-(5-phospho-beta-D-ribosyl)imidazole-4-carboxamide + L-glutamate + H(+). The catalysed reaction is L-glutamine + H2O = L-glutamate + NH4(+). It functions in the pathway amino-acid biosynthesis; L-histidine biosynthesis; L-histidine from 5-phospho-alpha-D-ribose 1-diphosphate: step 5/9. Functionally, IGPS catalyzes the conversion of PRFAR and glutamine to IGP, AICAR and glutamate. The HisH subunit catalyzes the hydrolysis of glutamine to glutamate and ammonia as part of the synthesis of IGP and AICAR. The resulting ammonia molecule is channeled to the active site of HisF. The sequence is that of Imidazole glycerol phosphate synthase subunit HisH from Xylella fastidiosa (strain Temecula1 / ATCC 700964).